The sequence spans 185 residues: CASP-like protein SELMODRAFT_413556 (185 aa).

Residues 1–89 (MATLPLSLIF…AVTVLFYLAK (89 aa)) are Cytoplasmic-facing. Residues 90–110 (LVFGILGLALSIIWLLHIIVF) traverse the membrane as a helical segment. The Extracellular portion of the chain corresponds to 111 to 131 (MLVNPPAFPFLNQVFIQLDSA). Residues 132–152 (WGLLGTTAFAIFCYYLIMSVI) form a helical membrane-spanning segment. Residues 153-163 (SGEMHSIHPMK) lie on the Cytoplasmic side of the membrane. The chain crosses the membrane as a helical span at residues 164–184 (YQGTLMNSFLFNVAIILLCST). Residue Arg185 is a topological domain, extracellular.

The protein belongs to the Casparian strip membrane proteins (CASP) family. As to quaternary structure, homodimer and heterodimers.

The protein localises to the cell membrane. The sequence is that of CASP-like protein SELMODRAFT_413556 from Selaginella moellendorffii (Spikemoss).